The sequence spans 356 residues: MTVPSLLLAGGRWRCFPLPLASSLFQALHNSCCRKESTAPKKIIPHIDFSDETAKESGKTLDKLFSSEQQASILHVLNTASNKELEAFKLLRGKKSFNIVEHRKKFGPFQNLESLMNVPLFQYKITIQVCNSILNPETGGKKKKLQESRLLRKLIKPEIGRERVKAVNSIVSIVSGTRRIAWAHLDRKLAVLDWQQTEYCQLMKGSYLSSVYLEEISSIISKMPKADFYVLEKAGPSFQNPSLFPVLLHFHMTEAMLYALLNTTFAQDGHHQVLSMNRNAVGKHFELMIGDTRTSGKEVVKQLLSESVLKDEPRVFFPPEKIVRYRQMFSSTEHNRVEELYDSLLQAIAFYELAVF.

Residues 1–35 constitute a mitochondrion transit peptide; it reads MTVPSLLLAGGRWRCFPLPLASSLFQALHNSCCRK.

Belongs to the TEFM family. Interacts with POLRMT.

The protein resides in the mitochondrion matrix. Its subcellular location is the mitochondrion nucleoid. Its function is as follows. Transcription elongation factor which increases mitochondrial RNA polymerase processivity. Regulates transcription of the mitochondrial genome, including genes important for the oxidative phosphorylation machinery. In Bos taurus (Bovine), this protein is Transcription elongation factor, mitochondrial (TEFM).